The sequence spans 401 residues: Collagen and calcium-binding EGF domain-containing protein 1 (401 aa).

An N-terminal signal peptide occupies residues 1-22; sequence MIYPGRGASLSVAVALVLFSSG. In terms of domain architecture, EGF-like; calcium-binding spans 126–167; sequence DIDECANNNETVCSQMCVNTPGSYRCDCHSGFYLEDDGKTCT. 3 cysteine pairs are disulfide-bonded: Cys130–Cys142, Cys138–Cys151, and Cys153–Cys166. Asn134 is a glycosylation site (N-linked (GlcNAc...) asparagine). Disordered stretches follow at residues 229 to 321 and 344 to 401; these read TTNS…PGSF and SRPL…DWPV. Collagen-like domains lie at 234 to 276 and 286 to 319; these read LPGP…PIGP and GRRG…GPPG. The segment covering 235–244 has biased composition (pro residues); the sequence is PGPPGPPGPA. Low complexity predominate over residues 246–258; it reads TPGAKGSSGSPGQ.

Belongs to the CCBE1 family. Not expressed in blood or lymphatic endothelial cells, correlating spatially and temporally with the migration routes of endothelial cells that bud from the PCV, migrate in association with somite boundaries and seed the horizontal myoseptum region from where lymphatic precursors later migrate.

It localises to the secreted. Functionally, required for lymphangioblast budding and angiogenic sprouting from venous endothelium during embryogenesis. Required for the formation of facial lymphatic structures. Necessary for lymphangiogenesis, but is probably not part of either the vegfc-vegfr3 signaling or sox18-prox1 transcriptional pathways. In Danio rerio (Zebrafish), this protein is Collagen and calcium-binding EGF domain-containing protein 1 (ccbe1).